Reading from the N-terminus, the 205-residue chain is MILSVLSSPALVSGLMVARAKNPVHSVLFPIPVFRDTSGLLLLLGLDFFAMIFPVVHIGAIAVSFLFVVMMFHIQIAEIHEEVLRYLPVSGIIGLIFWWEMFFILDNESIPLLPTQRNTTSLRYTVYAGKVRSWTNLETLGNLLYTYYSVWFLVPSLILLVAMIGAIVLTMHRTTKVKRQDVFRRNAIDFRRTIMRRTTDPLTIY.

The next 3 helical transmembrane spans lie at 48 to 68 (FFAMIFPVVHIGAIAVSFLFV), 86 to 106 (YLPVSGIIGLIFWWEMFFILD), and 150 to 170 (VWFLVPSLILLVAMIGAIVLT).

It belongs to the complex I subunit 6 family. Complex I is composed of about 45 different subunits.

Its subcellular location is the mitochondrion membrane. The catalysed reaction is a ubiquinone + NADH + 5 H(+)(in) = a ubiquinol + NAD(+) + 4 H(+)(out). Its function is as follows. Core subunit of the mitochondrial membrane respiratory chain NADH dehydrogenase (Complex I) that is believed to belong to the minimal assembly required for catalysis. Complex I functions in the transfer of electrons from NADH to the respiratory chain. The immediate electron acceptor for the enzyme is believed to be ubiquinone. The chain is NADH-ubiquinone oxidoreductase chain 6 (ND6) from Brassica campestris (Field mustard).